The sequence spans 143 residues: Crossover junction endodeoxyribonuclease Hjc (143 aa).

Glutamate 12 provides a ligand contact to Mg(2+). Serine 32 is an active-site residue. Residues aspartate 42 and glutamate 55 each contribute to the Mg(2+) site.

It belongs to the Holliday junction resolvase Hjc family. Homodimer. Interacts with PCNA subunit PCNA1. Mg(2+) serves as cofactor.

The enzyme catalyses Endonucleolytic cleavage at a junction such as a reciprocal single-stranded crossover between two homologous DNA duplexes (Holliday junction).. With respect to regulation, autoinhibits at very high concentrations, possibly because of extreme junction distortion. Inhibition (and activity at low concentrations of enzyme) is stimulated by dsDNA and Sso7d. Activity stimulated by PCNA subunit PCNA1. Functionally, a structure-specific endonuclease that resolves Holliday junction (HJ) intermediates during genetic recombination; may have some degree of sequence preference in a mobile junction. Cleaves 4-way DNA junctions introducing paired nicks in opposing strands, leaving a 5'-terminal phosphate and a 3'-terminal hydroxyl group that are subsequently ligated to produce recombinant products. Can cleave all 4 strands 3 bases 3' of the junction center. Cleaves both mobile and immobile junctions. Modifies the structure of the 4-way DNA junction, a model Holliday junction structure. The protein forms multiple complexes with 4-way DNA, suggesting more than 1 homodimer can bind to each junction. This is Crossover junction endodeoxyribonuclease Hjc from Saccharolobus solfataricus (strain ATCC 35092 / DSM 1617 / JCM 11322 / P2) (Sulfolobus solfataricus).